The primary structure comprises 815 residues: Phenylalanine--tRNA ligase beta subunit (815 aa).

The tRNA-binding domain maps to 39 to 148; it reads SKELQKFEVA…KDAVVGDNFT (110 aa). The B5 domain maps to 421 to 496; it reads PQKKPLDFSV…RIYGYDKIES (76 aa). The Mg(2+) site is built by D474, D480, E483, and E484. In terms of domain architecture, FDX-ACB spans 721–814; the sequence is SDYQANFRDY…ISQKFQGILR (94 aa).

The protein belongs to the phenylalanyl-tRNA synthetase beta subunit family. Type 1 subfamily. As to quaternary structure, tetramer of two alpha and two beta subunits. Mg(2+) is required as a cofactor.

Its subcellular location is the cytoplasm. The enzyme catalyses tRNA(Phe) + L-phenylalanine + ATP = L-phenylalanyl-tRNA(Phe) + AMP + diphosphate + H(+). This chain is Phenylalanine--tRNA ligase beta subunit (pheT), found in Rickettsia prowazekii (strain Madrid E).